We begin with the raw amino-acid sequence, 892 residues long: Zinc finger protein 512B (892 aa).

Positions 1 to 82 are disordered; that stretch reads MTDPFCVGGR…KKGRPKAENQ (82 aa). A compositionally biased stretch (low complexity) spans 8-19; that stretch reads GGRRLPGSSKSG. The segment at 105 to 129 adopts a C2H2-type 1; atypical zinc-finger fold; it reads VKCPNSGCWLEFPSIYGLKYHYQRC. The segment at 140–163 adopts a C2H2-type 2 zinc-finger fold; it reads FPCPFCEAAFTSKTQLEKHRIWNH. Disordered stretches follow at residues 323-473 and 562-582; these read MVLL…RKKV and EHSA…EERE. Residues 371–384 are compositionally biased toward polar residues; the sequence is SMGQSSAFQLSADT. Low complexity predominate over residues 385 to 398; it reads SSGSLSPGSRPSGG. At Ser-409 the chain carries Phosphoserine. The span at 418-428 shows a compositional bias: basic residues; it reads TKHRRKQKTPK. The NuRD interaction motif signature appears at 421 to 427; that stretch reads RRKQKTP. A C2H2-type 3 zinc finger spans residues 540-563; that stretch reads LKCQHCRKQFKSKAGLNYHTMAEH. Residues 594 to 618 form a C2H2-type 4; atypical zinc finger; sequence LRCPQEGCGAAFSSLMGYQYHQRRC. The segment at 630–653 adopts a C2H2-type 5 zinc-finger fold; the sequence is FPCTHCGKTYRSKAGHDYHVRSEH. The segment at 649–682 is disordered; that stretch reads VRSEHTAPPPEEPTDKSPEAEDPLGVERTPSGRV. Ser-686 is modified (phosphoserine). The C2H2-type 6; atypical zinc finger occupies 750-774; that stretch reads VNCPNDCCEAIYSSVSGLKAHLASC. A C2H2-type 7 zinc finger spans residues 784–807; sequence YRCLLCPKEFSSESGVKYHILKTH. The disordered stretch occupies residues 812-892; the sequence is FRTSADPPPK…KVGVSKAPEK (81 aa). A compositionally biased stretch (basic and acidic residues) spans 819–831; that stretch reads PPKHRSQDSLVPK. Residues 832-849 show a composition bias toward basic residues; that stretch reads KEKKKNLAGGKKRGRKPK. Residues 850–876 are compositionally biased toward basic and acidic residues; that stretch reads ERTPEEPVAKLPPRRDDWPPGCRDKGA.

It belongs to the krueppel C2H2-type zinc-finger protein family. As to quaternary structure, interacts (via its NuRD interaction motif) with RBBP4 of the nucleosome remodeling and deacetylase (NuRD) complex; the interaction is direct and may play a role in repressing gene expression.

Its subcellular location is the nucleus. Involved in transcriptional regulation by repressing gene expression. Associates with the nucleosome remodeling and histone deacetylase (NuRD) complex, which promotes transcriptional repression by histone deacetylation and nucleosome remodeling. This Homo sapiens (Human) protein is Zinc finger protein 512B (ZNF512B).